The chain runs to 663 residues: UvrABC system protein B (663 aa).

The Helicase ATP-binding domain maps to 31 to 188 (DNIEGGEKAQ…NDLVDIQFER (158 aa)). 44-51 (GATGTGKT) provides a ligand contact to ATP. The short motif at 97 to 120 (YYDYYQPEAYVPSSDTYIEKDSSV) is the Beta-hairpin element. One can recognise a Helicase C-terminal domain in the interval 435–601 (QMDDLLGEIN…TIKKDIRDLI (167 aa)). A UVR domain is found at 627 to 662 (QEAIKKLQKQMQEAAELLDFELAAQIRDMVLELKAM).

This sequence belongs to the UvrB family. Forms a heterotetramer with UvrA during the search for lesions. Interacts with UvrC in an incision complex.

The protein resides in the cytoplasm. The UvrABC repair system catalyzes the recognition and processing of DNA lesions. A damage recognition complex composed of 2 UvrA and 2 UvrB subunits scans DNA for abnormalities. Upon binding of the UvrA(2)B(2) complex to a putative damaged site, the DNA wraps around one UvrB monomer. DNA wrap is dependent on ATP binding by UvrB and probably causes local melting of the DNA helix, facilitating insertion of UvrB beta-hairpin between the DNA strands. Then UvrB probes one DNA strand for the presence of a lesion. If a lesion is found the UvrA subunits dissociate and the UvrB-DNA preincision complex is formed. This complex is subsequently bound by UvrC and the second UvrB is released. If no lesion is found, the DNA wraps around the other UvrB subunit that will check the other stand for damage. This chain is UvrABC system protein B, found in Streptococcus mutans serotype c (strain ATCC 700610 / UA159).